Here is a 563-residue protein sequence, read N- to C-terminus: MTKDEDSGTTDGGYSTPDIAVQEKQDQPPAPEPEYATGFRLAAIMSTIFLSTLLAALDIGIVATAIPGITDDFHRLDDVGWYGGACFLLVGSSAPMWGKLYKYFSAQLVYLVSVVIFLVGSIVAAAAPNSAALIVGRALQGWGCSGTLGGSVLMISYVAEPQKRAMLIGMWMSVFMFSTIIGPLLGGAFTSEVTWRWCFWINLPVGGPVIALVVLFFEVPKHIKPAPATWVEILRQLDLPGFALLLTSLVCLTVALQWGGQTKSWSYGSVIATLVMWVVLTIAFFVVEWIQGDYAMVPLALLKPRLVWTNALYGWIANLANFQVLFYLPIYFQSIHGQSAIASGVNSLPFMAFFAAGSMLSGFLIGKTRLLQPYEFASGVLATVGAALLYTLDIDSSKARYIGPQVIFGIGIGLGNQVPMTALESFSKPEHIAPTTGVMLMCNSISGAYFVTAAQSIFANYMLKELASIAPDMDPIQVLTTGASEVSHVFQGAELEAVLAAYLAGIKDVFAFSLAGAAFTVVLSLAIPFKKLPNMFAGPSNGQEEEEGKKDGPAEKKEDEVAV.

Positions 1-32 (MTKDEDSGTTDGGYSTPDIAVQEKQDQPPAPE) are disordered. Helical transmembrane passes span 48–68 (IFLS…AIPG), 78–98 (DVGW…PMWG), 108–128 (LVYL…AAAP), 138–158 (ALQG…ISYV), 165–185 (AMLI…GPLL), 197–217 (WCFW…VLFF), 239–259 (LPGF…LQWG), 270–290 (VIAT…VEWI), 312–332 (LYGW…PIYF), 345–365 (VNSL…GFLI), 374–394 (YEFA…TLDI), 406–426 (VIFG…LESF), 438–458 (VMLM…QSIF), and 509–529 (VFAF…AIPF). The interval 538 to 563 (GPSNGQEEEEGKKDGPAEKKEDEVAV) is disordered. The segment covering 547–563 (EGKKDGPAEKKEDEVAV) has biased composition (basic and acidic residues).

This sequence belongs to the major facilitator superfamily. TCR/Tet family.

It localises to the cell membrane. In terms of biological role, efflux pump; part of the gene cluster that mediates the biosynthesis of notoamide, a fungal indole alkaloid that belongs to a family of natural products containing a characteristic bicyclo[2.2.2]diazaoctane core. This Aspergillus sp. (strain MF297-2) protein is Efflux pump notK.